The chain runs to 567 residues: Sensor histidine kinase MtrB (567 aa).

A compositionally biased stretch (basic residues) spans 1–15 (MIFGSRRRIRGRRGR). The tract at residues 1–20 (MIFGSRRRIRGRRGRSGPMT) is disordered. The next 2 helical transmembrane spans lie at 42–62 (VVAL…FVLT) and 213–233 (GTMA…ALLV). One can recognise an HAMP domain in the interval 235–287 (RQVVVPVRSASRIAERFAEGHLSERMPVRGEDDMARLAVSFNDMAESLSRQIA). The Histidine kinase domain occupies 302–519 (DVSHELRTPL…CFRLTLPMVR (218 aa)). Phosphohistidine; by autocatalysis is present on histidine 305. Over residues 529–551 (PMKPIPQPVLQPVAQPNPQPMPP) the composition is skewed to pro residues. Positions 529–567 (PMKPIPQPVLQPVAQPNPQPMPPEYKERQRPREHAEWSG) are disordered. A compositionally biased stretch (basic and acidic residues) spans 552 to 567 (EYKERQRPREHAEWSG).

Interacts with MrtA. Interacts with LpqB, probably extracytoplasmically via MtrB's sensor domain. Requires Mg(2+) as cofactor. It depends on Ca(2+) as a cofactor. The C-terminal domain (residues 234-567) autophosphorylates.

It is found in the cell membrane. The catalysed reaction is ATP + protein L-histidine = ADP + protein N-phospho-L-histidine.. Its activity is regulated as follows. Ca(2+) ions inhibit the phosphotransfer from MtrB to MtrA. In terms of biological role, member of the two-component regulatory system MtrA/MtrB. Probably functions as a membrane-associated protein kinase that phosphorylates MtrA in response to environmental signals. Autophosphorylates and transfers phosphate to MtrA in vitro. Overexpression of MtrA alone decreases bacterial virulence in mouse infection; co-expression of MtrA and MtrB restores normal bacterial growth, suggesting that bacterial growth in macrophages requires an optimal ratio of MtrB to MtrA. Probably plays a role in cell division. The protein is Sensor histidine kinase MtrB (mtrB) of Mycobacterium tuberculosis (strain ATCC 25618 / H37Rv).